Reading from the N-terminus, the 389-residue chain is tRNA(Met) cytidine acetate ligase (389 aa).

ATP contacts are provided by residues 8–21 (IAEFNPFHKGHEYL), Gly97, Asn153, and Arg176.

It belongs to the TmcAL family.

Its subcellular location is the cytoplasm. The catalysed reaction is cytidine(34) in elongator tRNA(Met) + acetate + ATP = N(4)-acetylcytidine(34) in elongator tRNA(Met) + AMP + diphosphate. Catalyzes the formation of N(4)-acetylcytidine (ac(4)C) at the wobble position of elongator tRNA(Met), using acetate and ATP as substrates. First activates an acetate ion to form acetyladenylate (Ac-AMP) and then transfers the acetyl group to tRNA to form ac(4)C34. The polypeptide is tRNA(Met) cytidine acetate ligase (Lactococcus lactis subsp. cremoris (strain SK11)).